A 658-amino-acid polypeptide reads, in one-letter code: Structure-specific endonuclease subunit SLX1 (658 aa).

Residues 12-92 (PFYACYFLRS…AKPHLSRHLK (81 aa)) enclose the GIY-YIG domain. Disordered stretches follow at residues 29–52 (YIGSTPAPPRRKRQHNGHLTQGAY), 239–269 (GVAEHPVKKRQTSSRQKPHTEETSAWPETLP), 288–328 (PIPQ…NGVD), and 594–658 (TTSR…IDLT). 2 stretches are compositionally biased toward basic and acidic residues: residues 308-324 (KLSDKARPSALEDHDAE) and 627-640 (SKIDGDGAGKDTKK). Residues 641-652 (NTTQKAKSNETS) are compositionally biased toward polar residues.

Belongs to the SLX1 family. As to quaternary structure, forms a heterodimer with SLX4. Requires a divalent metal cation as cofactor.

Its subcellular location is the nucleus. Catalytic subunit of the SLX1-SLX4 structure-specific endonuclease that resolves DNA secondary structures generated during DNA repair and recombination. Has endonuclease activity towards branched DNA substrates, introducing single-strand cuts in duplex DNA close to junctions with ss-DNA. The polypeptide is Structure-specific endonuclease subunit SLX1 (Mycosarcoma maydis (Corn smut fungus)).